A 77-amino-acid polypeptide reads, in one-letter code: DinI-like protein in retron Ec67 (77 aa).

The protein belongs to the DinI family.

This chain is DinI-like protein in retron Ec67, found in Escherichia coli.